The chain runs to 780 residues: Striatin (780 aa).

The stretch at 53-120 (LHFLQHEWAR…QERAKYHKLK (68 aa)) forms a coiled coil. The tract at residues 55–63 (FLQHEWARF) is caveolin-binding. The tract at residues 123–150 (TELNQGDMKPPSYDSDEGNETEVQPQQN) is disordered. Position 137 is a phosphoserine (S137). A calmodulin-binding region spans residues 149 to 166 (QNSQLMWKQGRQLLRQYL). Position 225 is a phosphothreonine (T225). Phosphoserine is present on residues S227, S229, S245, and S259. Disordered regions lie at residues 289 to 312 (DFLV…DWEK), 334 to 353 (EQYK…NRSK), and 364 to 392 (VDEL…ELSR). A compositionally biased stretch (basic and acidic residues) spans 299-312 (NESRSAGDGTDWEK). Over residues 338 to 351 (KERKGKKGVKRPNR) the composition is skewed to basic residues. WD repeat units follow at residues 461–500 (SHFD…PAKK), 514–553 (AHKG…VDPY), 567–606 (GHTD…PALS), 662–701 (SSSC…LIHS), 704–743 (AHLE…CIQE), and 750–780 (KFEE…KVFV).

Belongs to the WD repeat striatin family. As to quaternary structure, part of the core of STRIPAK complexes composed of PP2A catalytic and scaffolding subunits, the striatins (PP2A regulatory subunits), the striatin-associated proteins MOB4, STRIP1 and STRIP2, PDCD10 and members of the STE20 kinases, such as STK24 and STK26. Interacts with CTTNBP2; this interaction may regulate dendritic spine distribution of STRN. Activation of glutamate receptors weakens the interaction with CTTNBP2. In terms of tissue distribution, mainly expressed in brain but is also expressed at low levels in various tissues such as kidney, spleen, skeletal muscle and lung.

Its subcellular location is the cytoplasm. The protein localises to the membrane. It localises to the cell projection. It is found in the dendritic spine. In terms of biological role, calmodulin-binding scaffolding protein which is the center of the striatin-interacting phosphatase and kinase (STRIPAK) complexes. STRIPAK complexes have critical roles in protein (de)phosphorylation and are regulators of multiple signaling pathways including Hippo, MAPK, nuclear receptor and cytoskeleton remodeling. Different types of STRIPAK complexes are involved in a variety of biological processes such as cell growth, differentiation, apoptosis, metabolism and immune regulation. The chain is Striatin (Strn) from Mus musculus (Mouse).